A 312-amino-acid chain; its full sequence is Eukaryotic translation initiation factor 2 subunit 2 (312 aa).

2 disordered regions span residues 26–104 (AALG…NLDM) and 125–146 (ADQA…SSTW). A Phosphoserine modification is found at S44. Acidic residues-rich tracts occupy residues 90–102 (AASE…EINL) and 125–142 (ADQA…DEDN). A Phosphoserine modification is found at S133. T145 is subject to Phosphothreonine. The C4-type zinc-finger motif lies at 260–284 (CHTCRSPETILQKDTRLFFLQCESC).

This sequence belongs to the eIF-2-beta/eIF-5 family. Eukaryotic translation initiation factor 2 eIF2 is a heterotrimeric complex composed of an alpha, a beta and a gamma subunit.

Its subcellular location is the cytoplasm. It localises to the cytosol. Functionally, component of the eIF2 complex that functions in the early steps of protein synthesis by forming a ternary complex with GTP and initiator tRNA. This complex binds to a 40S ribosomal subunit, followed by mRNA binding to form a 43S pre-initiation complex (43S PIC). Junction of the 60S ribosomal subunit to form the 80S initiation complex is preceded by hydrolysis of the GTP bound to eIF2 and release of an eIF2-GDP binary complex. In order for eIF2 to recycle and catalyze another round of initiation, the GDP bound to eIF2 must exchange with GTP by way of a reaction catalyzed by eIF2B. The polypeptide is Eukaryotic translation initiation factor 2 subunit 2 (Drosophila melanogaster (Fruit fly)).